The primary structure comprises 56 residues: Single-pass membrane and coiled-coil domain-containing protein 4 homolog (56 aa).

A disordered region spans residues 1–27 (MRQLPGKAAKETRKMKRERKQQNKEGH). Residues 9–31 (AKETRKMKRERKQQNKEGHNRVV) are a coiled coil. A helical transmembrane segment spans residues 30 to 50 (VVTVAIPVCLAVFVMLIVYVY).

This sequence belongs to the SMCO4 family.

It localises to the membrane. This Nematostella vectensis (Starlet sea anemone) protein is Single-pass membrane and coiled-coil domain-containing protein 4 homolog.